The chain runs to 428 residues: Phosphomethylpyrimidine synthase 1 (428 aa).

Substrate is bound by residues asparagine 65, methionine 94, tyrosine 123, histidine 158, 180-182 (SRG), 221-224 (DGMR), and glutamate 260. Histidine 264 serves as a coordination point for Zn(2+). Tyrosine 287 is a substrate binding site. Position 328 (histidine 328) interacts with Zn(2+). Positions 405, 408, and 412 each coordinate [4Fe-4S] cluster.

The protein belongs to the ThiC family. Requires [4Fe-4S] cluster as cofactor.

It carries out the reaction 5-amino-1-(5-phospho-beta-D-ribosyl)imidazole + S-adenosyl-L-methionine = 4-amino-2-methyl-5-(phosphooxymethyl)pyrimidine + CO + 5'-deoxyadenosine + formate + L-methionine + 3 H(+). It functions in the pathway cofactor biosynthesis; thiamine diphosphate biosynthesis. Catalyzes the synthesis of the hydroxymethylpyrimidine phosphate (HMP-P) moiety of thiamine from aminoimidazole ribotide (AIR) in a radical S-adenosyl-L-methionine (SAM)-dependent reaction. This Methanosarcina mazei (strain ATCC BAA-159 / DSM 3647 / Goe1 / Go1 / JCM 11833 / OCM 88) (Methanosarcina frisia) protein is Phosphomethylpyrimidine synthase 1.